The following is a 163-amino-acid chain: Transcription antitermination protein NusB (163 aa).

It belongs to the NusB family.

In terms of biological role, involved in transcription antitermination. Required for transcription of ribosomal RNA (rRNA) genes. Binds specifically to the boxA antiterminator sequence of the ribosomal RNA (rrn) operons. The protein is Transcription antitermination protein NusB of Granulibacter bethesdensis (strain ATCC BAA-1260 / CGDNIH1).